Reading from the N-terminus, the 504-residue chain is Maturase K (504 aa).

It belongs to the intron maturase 2 family. MatK subfamily.

It is found in the plastid. The protein localises to the chloroplast. Functionally, usually encoded in the trnK tRNA gene intron. Probably assists in splicing its own and other chloroplast group II introns. The polypeptide is Maturase K (Vauquelinia californica (Arizona rosewood)).